The following is an 843-amino-acid chain: Protein translocase subunit SecA (843 aa).

Residues Gln85, 103-107, and Asp490 contribute to the ATP site; that span reads GEGKT. Residues 799 to 834 form a disordered region; that stretch reads KNAVENRSDDSLPKQPVKAEPRVGRNDPCPCGSGKK. Basic and acidic residues predominate over residues 802 to 823; sequence VENRSDDSLPKQPVKAEPRVGR. Residues Cys827, Cys829, Cys838, and Cys839 each coordinate Zn(2+).

It belongs to the SecA family. In terms of assembly, monomer and homodimer. Part of the essential Sec protein translocation apparatus which comprises SecA, SecYEG and auxiliary proteins SecDF. Other proteins may also be involved. The cofactor is Zn(2+).

It is found in the cell membrane. The protein localises to the cytoplasm. It catalyses the reaction ATP + H2O + cellular proteinSide 1 = ADP + phosphate + cellular proteinSide 2.. Functionally, part of the Sec protein translocase complex. Interacts with the SecYEG preprotein conducting channel. Has a central role in coupling the hydrolysis of ATP to the transfer of proteins into and across the cell membrane, serving as an ATP-driven molecular motor driving the stepwise translocation of polypeptide chains across the membrane. The polypeptide is Protein translocase subunit SecA (Heliobacterium modesticaldum (strain ATCC 51547 / Ice1)).